We begin with the raw amino-acid sequence, 321 residues long: MGEWTILERLLEAAVQQHSTMIGRILLTVVVIFRILIVAIVGETVYDDEQTMFVCNTLQPGCNQACYDRAFPISHIRYWVFQIIMVCTPSLCFITYSVHQSAKQRERRYSTVFLALDRDPAESIGGPGGTGGGGSGGSKREDKKLQNAIVNGVLQNTETTSKETEPDCLEVKELTPHPSGLRTAARSKLRRQEGISRFYIIQVVFRNALEIGFLVGQYFLYGFSVPGLYECNRYPCIKEVECYVSRPTEKTVFLVFMFAVSGICVVLNLAELNHLGWRKIKLAVRGAQAKRKSVYEIRNKDLPRVSVPNFGRTQSSDSAYV.

The Cytoplasmic segment spans residues 1–19; that stretch reads MGEWTILERLLEAAVQQHS. Residues 20-42 traverse the membrane as a helical segment; the sequence is TMIGRILLTVVVIFRILIVAIVG. The Extracellular segment spans residues 43 to 75; it reads ETVYDDEQTMFVCNTLQPGCNQACYDRAFPISH. A helical transmembrane segment spans residues 76–98; sequence IRYWVFQIIMVCTPSLCFITYSV. Topologically, residues 99-197 are cytoplasmic; that stretch reads HQSAKQRERR…KLRRQEGISR (99 aa). The segment at 120–141 is disordered; sequence PAESIGGPGGTGGGGSGGSKRE. Positions 125-137 are enriched in gly residues; sequence GGPGGTGGGGSGG. Residues 198-220 form a helical membrane-spanning segment; the sequence is FYIIQVVFRNALEIGFLVGQYFL. At 221–252 the chain is on the extracellular side; that stretch reads YGFSVPGLYECNRYPCIKEVECYVSRPTEKTV. Residues 253–275 form a helical membrane-spanning segment; sequence FLVFMFAVSGICVVLNLAELNHL. Topologically, residues 276-321 are cytoplasmic; sequence GWRKIKLAVRGAQAKRKSVYEIRNKDLPRVSVPNFGRTQSSDSAYV.

It belongs to the connexin family. Delta-type subfamily. As to quaternary structure, a connexon is composed of a hexamer of connexins. Highly expressed in neurons.

The protein localises to the cell membrane. Its subcellular location is the cell junction. It is found in the gap junction. Its function is as follows. One gap junction consists of a cluster of closely packed pairs of transmembrane channels, the connexons, through which materials of low MW diffuse from one cell to a neighboring cell. In Mus musculus (Mouse), this protein is Gap junction delta-2 protein (Gjd2).